The sequence spans 133 residues: Small ribosomal subunit protein uS11 (133 aa).

Belongs to the universal ribosomal protein uS11 family. In terms of assembly, part of the 30S ribosomal subunit. Interacts with proteins S7 and S18. Binds to IF-3.

Located on the platform of the 30S subunit, it bridges several disparate RNA helices of the 16S rRNA. Forms part of the Shine-Dalgarno cleft in the 70S ribosome. The polypeptide is Small ribosomal subunit protein uS11 (Methylibium petroleiphilum (strain ATCC BAA-1232 / LMG 22953 / PM1)).